The sequence spans 307 residues: MAFSWQEQIKPAGTQDIQCDIEYLDKSYIHVYLDGVETTGYTWTSATNIRLNTALAASTTVLLIRKTEREYLYIEFASGSPFIEVNVDSQNTQFLHLAQELVEGRAIPGFYGTISMNGYRITDLANPINSQDAATKSYVDAADALLGQRIDVEAATRKAADDALSMRTSALENTFISGVETVSYPWSTVLAEATDEVTPGLAFTKAVVEINGVGQIRGYSFEIVDNTILFAKTLPAGTVVAARLGADVTAGDGFATQASVDYLADSLGDLAYLDTAEAVPDATGAGDVVAKLNALLASLRTSGVLAS.

The protein resides in the virion. In terms of biological role, anchors indirectly the receptor binding (RBP) protein (depolymerase) to the virion. The sequence is that of Anchor protein from Klebsiella phage KP34 (Bacteriophage KP34).